The primary structure comprises 239 residues: Uridylate kinase (239 aa).

12-15 (KLSG) lines the ATP pocket. A UMP-binding site is contributed by Gly54. Positions 55 and 59 each coordinate ATP. UMP contacts are provided by residues Asp74 and 135–142 (TGNPYFTT). ATP-binding residues include Thr162, Tyr168, and Asp171.

Belongs to the UMP kinase family. In terms of assembly, homohexamer.

Its subcellular location is the cytoplasm. It catalyses the reaction UMP + ATP = UDP + ADP. Its pathway is pyrimidine metabolism; CTP biosynthesis via de novo pathway; UDP from UMP (UMPK route): step 1/1. Its activity is regulated as follows. Inhibited by UTP. Functionally, catalyzes the reversible phosphorylation of UMP to UDP. The protein is Uridylate kinase of Fusobacterium nucleatum subsp. nucleatum (strain ATCC 25586 / DSM 15643 / BCRC 10681 / CIP 101130 / JCM 8532 / KCTC 2640 / LMG 13131 / VPI 4355).